The following is a 186-amino-acid chain: Adenine phosphoribosyltransferase (186 aa).

The protein belongs to the purine/pyrimidine phosphoribosyltransferase family. As to quaternary structure, homodimer.

Its subcellular location is the cytoplasm. It catalyses the reaction AMP + diphosphate = 5-phospho-alpha-D-ribose 1-diphosphate + adenine. Its pathway is purine metabolism; AMP biosynthesis via salvage pathway; AMP from adenine: step 1/1. Its function is as follows. Catalyzes a salvage reaction resulting in the formation of AMP, that is energically less costly than de novo synthesis. The chain is Adenine phosphoribosyltransferase from Xanthomonas axonopodis pv. citri (strain 306).